The chain runs to 535 residues: Putative subtilisin-like proteinase 2 (535 aa).

The first 17 residues, 1–17, serve as a signal peptide directing secretion; that stretch reads MFFVGVAVLAALQSVWG. Positions 221–475 constitute a Peptidase S8 domain; it reads NWIFRVLQIK…IPRLGCKGRI (255 aa). Catalysis depends on charge relay system residues aspartate 255 and histidine 277. Cysteine 369 and cysteine 400 are oxidised to a cystine. Serine 420 functions as the Charge relay system in the catalytic mechanism. A helical membrane pass occupies residues 489–509; the sequence is IVPLVFVVLITSALLYLLLIG.

This sequence belongs to the peptidase S8 family.

The protein localises to the membrane. May be involved in the degradation of proteins for nutrient acquisition or possess a regulatory function by proteolytic activation of proproteins. The protein is Putative subtilisin-like proteinase 2 (SPL2) of Encephalitozoon cuniculi (strain GB-M1) (Microsporidian parasite).